The primary structure comprises 300 residues: Vetispiradiene synthase 2 (300 aa).

The Mg(2+) site is built by Asp54, Asp58, Asp197, Thr201, and Glu205. Residues 54-58 (DDTFD) carry the DDXXD motif motif.

This sequence belongs to the terpene synthase family. Tpsa subfamily. The cofactor is Mg(2+).

The protein resides in the cytoplasm. It carries out the reaction (2E,6E)-farnesyl diphosphate = (-)-vetispiradiene + diphosphate. It participates in secondary metabolite biosynthesis; terpenoid biosynthesis. In terms of biological role, sesquiterpene synthase that catalyzes the formation of vetispiradiene from trans,trans-farnesyl diphosphate. The initial internal cyclization produces the monocyclic intermediate germacrene A. The chain is Vetispiradiene synthase 2 from Hyoscyamus muticus (Egyptian henbane).